A 464-amino-acid chain; its full sequence is Potassium/proton antiporter CemA (464 aa).

Helical transmembrane passes span 36–56 (FSLS…TEIL), 241–261 (ASVS…QIAI), 341–361 (LLLR…LLIF), 389–409 (ILLL…EILV), and 425–445 (TPCF…YWIF).

The protein belongs to the CemA family.

The protein resides in the plastid. Its subcellular location is the chloroplast inner membrane. The catalysed reaction is K(+)(in) + H(+)(out) = K(+)(out) + H(+)(in). Functionally, contributes to K(+)/H(+) antiport activity by supporting proton efflux to control proton extrusion and homeostasis in chloroplasts in a light-dependent manner to modulate photosynthesis. Prevents excessive induction of non-photochemical quenching (NPQ) under continuous-light conditions. Indirectly promotes efficient inorganic carbon uptake into chloroplasts. This Adiantum capillus-veneris (Maidenhair fern) protein is Potassium/proton antiporter CemA.